The chain runs to 369 residues: Phospho-N-acetylmuramoyl-pentapeptide-transferase (369 aa).

10 helical membrane-spanning segments follow: residues 2–22, 55–75, 86–106, 122–142, 158–178, 196–216, 239–259, 266–286, 291–311, and 348–368; these read IALL…TPLF, TVVV…MWMM, ALLL…DDFI, LVLQ…FPNA, IPWL…FVLW, LDGL…LMGI, PLDL…FLWW, IFMG…FAIL, LLLA…IIQV, and ILGG…WVVL.

The protein belongs to the glycosyltransferase 4 family. MraY subfamily. Requires Mg(2+) as cofactor.

Its subcellular location is the cell membrane. The enzyme catalyses UDP-N-acetyl-alpha-D-muramoyl-L-alanyl-gamma-D-glutamyl-meso-2,6-diaminopimeloyl-D-alanyl-D-alanine + di-trans,octa-cis-undecaprenyl phosphate = di-trans,octa-cis-undecaprenyl diphospho-N-acetyl-alpha-D-muramoyl-L-alanyl-D-glutamyl-meso-2,6-diaminopimeloyl-D-alanyl-D-alanine + UMP. It participates in cell wall biogenesis; peptidoglycan biosynthesis. Its function is as follows. Catalyzes the initial step of the lipid cycle reactions in the biosynthesis of the cell wall peptidoglycan: transfers peptidoglycan precursor phospho-MurNAc-pentapeptide from UDP-MurNAc-pentapeptide onto the lipid carrier undecaprenyl phosphate, yielding undecaprenyl-pyrophosphoryl-MurNAc-pentapeptide, known as lipid I. In Arthrobacter sp. (strain FB24), this protein is Phospho-N-acetylmuramoyl-pentapeptide-transferase.